A 226-amino-acid polypeptide reads, in one-letter code: 7-cyano-7-deazaguanine synthase (226 aa).

Residue 7–17 (LSGGMDSLVTT) participates in ATP binding. Residues cysteine 187, cysteine 195, cysteine 198, and cysteine 201 each coordinate Zn(2+).

Belongs to the QueC family. Requires Zn(2+) as cofactor.

The catalysed reaction is 7-carboxy-7-deazaguanine + NH4(+) + ATP = 7-cyano-7-deazaguanine + ADP + phosphate + H2O + H(+). It participates in purine metabolism; 7-cyano-7-deazaguanine biosynthesis. In terms of biological role, catalyzes the ATP-dependent conversion of 7-carboxy-7-deazaguanine (CDG) to 7-cyano-7-deazaguanine (preQ(0)). This is 7-cyano-7-deazaguanine synthase from Chloroherpeton thalassium (strain ATCC 35110 / GB-78).